The sequence spans 617 residues: Chaperone protein DnaK (617 aa).

A Phosphothreonine; by autocatalysis modification is found at threonine 174. Positions 575 to 592 (AQAQQQAQQQAQGQQGAQ) are enriched in low complexity. The segment at 575-617 (AQAQQQAQQQAQGQQGAQTDNQTGQNDGKTIDVDYEEVDDDDK) is disordered. Residues 593 to 602 (TDNQTGQNDG) show a composition bias toward polar residues. The segment covering 607–617 (VDYEEVDDDDK) has biased composition (acidic residues).

It belongs to the heat shock protein 70 family.

Acts as a chaperone. This chain is Chaperone protein DnaK, found in Halothermothrix orenii (strain H 168 / OCM 544 / DSM 9562).